The sequence spans 397 residues: Autophagy-related protein 29 (397 aa).

The tract at residues 71 to 397 (ATAAVRNSGP…RSRYTSSSNQ (327 aa)) is disordered. Residues 230–240 (QYEDDDDDESE) are compositionally biased toward acidic residues. Polar residues predominate over residues 245–259 (PYTSPSSKTSAQDLG). Positions 269–282 (SGKRPHKSHGKPAI) are enriched in basic residues. Composition is skewed to basic and acidic residues over residues 300-309 (KPDKTDRSTE) and 330-341 (GGKDKGYSREGS). 2 stretches are compositionally biased toward polar residues: residues 343-363 (GTPS…TQSA) and 381-397 (FSIS…SSNQ).

Belongs to the ATG29 family. In terms of assembly, forms a stable complex with ATG17 and ATG31. Interacts directly with ATG31. The ATG17-ATG29-ATG31 complex interacts with the ATG1-ATG13 complex. Note=The interaction with the ATG1-ATG13 complex is induced by starvation.

The protein localises to the preautophagosomal structure. Functionally, plays a role in autophagy. Functions at the preautophagosomal structure (PAS) in order to form normal autophagosomes under starvation conditions. Also plays a role in mitophagy. Autophagy is required for proper vegetative growth, asexual/sexual reproduction, and full virulence. Autophagy is particularly involved in the biosynthesis of deoxynivalenol (DON), an important virulence determinant. The protein is Autophagy-related protein 29 of Gibberella zeae (strain ATCC MYA-4620 / CBS 123657 / FGSC 9075 / NRRL 31084 / PH-1) (Wheat head blight fungus).